Reading from the N-terminus, the 102-residue chain is Large ribosomal subunit protein uL24 (102 aa).

The disordered stretch occupies residues histidine 44 to serine 65.

It belongs to the universal ribosomal protein uL24 family. As to quaternary structure, part of the 50S ribosomal subunit.

In terms of biological role, one of two assembly initiator proteins, it binds directly to the 5'-end of the 23S rRNA, where it nucleates assembly of the 50S subunit. One of the proteins that surrounds the polypeptide exit tunnel on the outside of the subunit. The polypeptide is Large ribosomal subunit protein uL24 (Shouchella clausii (strain KSM-K16) (Alkalihalobacillus clausii)).